Reading from the N-terminus, the 538-residue chain is Putative amidase kk1C (538 aa).

Residues 1 to 32 (MTEPTWKTVASEKQQQRESKIPSEWQIPKSSH) form a disordered region. Active-site charge relay system residues include Lys-134 and Ser-209. The Acyl-ester intermediate role is filled by Ser-233.

This sequence belongs to the amidase family.

It catalyses the reaction a monocarboxylic acid amide + H2O = a monocarboxylate + NH4(+). It functions in the pathway secondary metabolite biosynthesis. Functionally, putative amidase; part of the gene cluster that mediates the biosynthesis of KK-1, a novel cyclic depsipeptide with 10 residues which is a promising active compound with high activity against many plant pathogens, especially Botrytis cinerea. The role of kk1C in KK-1 biosynthesis has still to be determined. The nonribosomal peptide synthetase (NRPS) kk1B catalyzes the elongation and cyclization of the decapeptide chain composed of 1 D-lactic acid residue (D-Lac), 1 pipecolic acid residue (Pip), 1 aspartic acid residue (Asp), 1 isoleucine residue (Ile), 1 glycine residue (Gly), 1 tyrosine residue (Tyr) and 4 valine residues (Val). The Asp, Ile and 3 Val residues are N-methylated by the 5 methyltransferase domains from the NRPS (found in modules 3, 5, 6, 7 and 9), whereas the Tyr residue is O-methylated by the cluster encoded O-methyltransferase kk1A. The thioesterase kk1J is likely to be involved in the corrective mechanism of peptide chain synthesis. The D-lactate dehydrogenase kk1H is involved in the synthesis of D-lactic acid from pyruvic acid, which is recognized by the A domain of the first kk1B module. The pyrroline-5-carboxylate reductase kk1I is involved in the synthesis of the L-pipecolic acid residue of KK-1 from delta-1-pyrroline-5-carboxylate (P5C), a metabolic intermediate of lysine. It is still unclear how kk1C and kk1D are involved in the production of KK-1. The sequence is that of Putative amidase kk1C from Curvularia clavata.